Reading from the N-terminus, the 491-residue chain is Glutamyl-tRNA(Gln) amidotransferase subunit A (491 aa).

Catalysis depends on charge relay system residues Lys79 and Ser158. The active-site Acyl-ester intermediate is the Ser182.

The protein belongs to the amidase family. GatA subfamily. As to quaternary structure, heterotrimer of A, B and C subunits.

The enzyme catalyses L-glutamyl-tRNA(Gln) + L-glutamine + ATP + H2O = L-glutaminyl-tRNA(Gln) + L-glutamate + ADP + phosphate + H(+). Functionally, allows the formation of correctly charged Gln-tRNA(Gln) through the transamidation of misacylated Glu-tRNA(Gln) in organisms which lack glutaminyl-tRNA synthetase. The reaction takes place in the presence of glutamine and ATP through an activated gamma-phospho-Glu-tRNA(Gln). The protein is Glutamyl-tRNA(Gln) amidotransferase subunit A of Maricaulis maris (strain MCS10) (Caulobacter maris).